The primary structure comprises 1953 residues: Putative surface-exposed virulence protein BigA (1953 aa).

The first 27 residues, 1–27 (MNPMQKKKLISIAIALTLQSYYIPAIA), serve as a signal peptide directing secretion. 3 disordered regions span residues 31 to 50 (NDDE…EKRA), 88 to 258 (GGGD…TFSN), and 1496 to 1517 (TTAP…PQQL). Residues 101 to 103 (PDN) form a 1; truncated repeat. The 15 X 11 AA tandem repeats stretch occupies residues 101 to 252 (PDNGGDVTPP…DDDDTPPDDS (152 aa)). One copy of the 2; truncated repeat lies at 104-113 (GGDVTPPDDG). Residues 114–122 (GNVTPPDDG) form a 3; truncated repeat. 11 consecutive repeat copies span residues 123–133 (GNVTPPDDGGD), 134–144 (DNVTPPDDSGD), 145–155 (DDVAPPDDSGD), 156–166 (DDVTPPDDSGD), 167–177 (DDVTPPDDSGD), 178–188 (GDVTPPDDSGD), 189–199 (DDVTPPDDSGD), 200–210 (DDVTPPDDSGD), 211–221 (DDVTPPDDSGD), 222–232 (DDVTPPDDSGD), and 233–243 (DDVTPPDDSGD). Composition is skewed to acidic residues over residues 141–177 (DSGD…DSGD) and 185–249 (DSGD…DTPP). One copy of the 15; truncated repeat lies at 244–252 (DDDTPPDDS). Positions 1649-1952 (SGAQATTVFR…GFMLNVKKTF (304 aa)) constitute an Autotransporter domain.

This is Putative surface-exposed virulence protein BigA (bigA) from Salmonella typhimurium (strain LT2 / SGSC1412 / ATCC 700720).